Consider the following 2110-residue polypeptide: Protein Ycf2 (2110 aa).

A disordered region spans residues 190-209; the sequence is DSSQLKGSSDQSRDPLDSIS. 1442 to 1449 is a binding site for ATP; that stretch reads GSIGTGRS.

This sequence belongs to the Ycf2 family.

The protein resides in the plastid. Its subcellular location is the chloroplast stroma. Probable ATPase of unknown function. Its presence in a non-photosynthetic plant (Epifagus virginiana) and experiments in tobacco indicate that it has an essential function which is probably not related to photosynthesis. The protein is Protein Ycf2 of Panax ginseng (Korean ginseng).